Here is a 299-residue protein sequence, read N- to C-terminus: tRNA dimethylallyltransferase (299 aa).

11–18 (GPTAVGKT) is an ATP binding site. 13–18 (TAVGKT) contributes to the substrate binding site. Positions 36-39 (DSQQ) are interaction with substrate tRNA.

It belongs to the IPP transferase family. As to quaternary structure, monomer. The cofactor is Mg(2+).

The enzyme catalyses adenosine(37) in tRNA + dimethylallyl diphosphate = N(6)-dimethylallyladenosine(37) in tRNA + diphosphate. Its function is as follows. Catalyzes the transfer of a dimethylallyl group onto the adenine at position 37 in tRNAs that read codons beginning with uridine, leading to the formation of N6-(dimethylallyl)adenosine (i(6)A). This Streptococcus pyogenes serotype M4 (strain MGAS10750) protein is tRNA dimethylallyltransferase.